Reading from the N-terminus, the 633-residue chain is Chaperone protein dnaK2 (633 aa).

Position 196 is a phosphothreonine; by autocatalysis (threonine 196). Positions 600 to 633 are disordered; the sequence is ATADGGPAQHAATGGPTSGGGGGDDVIDAEFDKG. A compositionally biased stretch (acidic residues) spans 624–633; it reads DVIDAEFDKG.

This sequence belongs to the heat shock protein 70 family.

In terms of biological role, acts as a chaperone. The sequence is that of Chaperone protein dnaK2 (dnaK2) from Streptomyces avermitilis (strain ATCC 31267 / DSM 46492 / JCM 5070 / NBRC 14893 / NCIMB 12804 / NRRL 8165 / MA-4680).